The chain runs to 131 residues: C-type natriuretic peptide 1 (131 aa).

A signal peptide spans 1–22; sequence MLCPVLLCATLLLLTPFEVTEA. Residues 23–109 constitute a propeptide that is removed on maturation; the sequence is RALHPSADAV…KRAEPDRSRR (87 aa). An intrachain disulfide couples cysteine 115 to cysteine 131.

The protein belongs to the natriuretic peptide family. Brain and spinal cord.

The protein resides in the secreted. Its function is as follows. Exhibits natriuretic and vasodepressant activity. Has cGMP-stimulating activity. May help to regulate body fluid homeostasis in a variety of aquatic environments. In Oryzias latipes (Japanese rice fish), this protein is C-type natriuretic peptide 1.